The following is a 235-amino-acid chain: Adenosine 5'-phosphosulfate reductase (235 aa).

Residues Cys-121, Cys-122, Cys-204, and Cys-207 each coordinate [4Fe-4S] cluster. Cys-230 serves as the catalytic Nucleophile; cysteine thiosulfonate intermediate.

This sequence belongs to the PAPS reductase family. CysH subfamily. [4Fe-4S] cluster is required as a cofactor.

The protein resides in the cytoplasm. The enzyme catalyses [thioredoxin]-disulfide + sulfite + AMP + 2 H(+) = adenosine 5'-phosphosulfate + [thioredoxin]-dithiol. It participates in sulfur metabolism; hydrogen sulfide biosynthesis; sulfite from sulfate. Catalyzes the formation of sulfite from adenosine 5'-phosphosulfate (APS) using thioredoxin as an electron donor. This chain is Adenosine 5'-phosphosulfate reductase, found in Geobacillus sp. (strain WCH70).